A 362-amino-acid polypeptide reads, in one-letter code: Phosphoserine aminotransferase (362 aa).

2 residues coordinate L-glutamate: Ser-9 and Arg-42. Residues 76-77, Trp-102, Thr-153, Asp-174, and Gln-197 contribute to the pyridoxal 5'-phosphate site; that span reads GR. The residue at position 198 (Lys-198) is an N6-(pyridoxal phosphate)lysine. 239 to 240 is a pyridoxal 5'-phosphate binding site; the sequence is NT.

This sequence belongs to the class-V pyridoxal-phosphate-dependent aminotransferase family. SerC subfamily. In terms of assembly, homodimer. Requires pyridoxal 5'-phosphate as cofactor.

The protein resides in the cytoplasm. The catalysed reaction is O-phospho-L-serine + 2-oxoglutarate = 3-phosphooxypyruvate + L-glutamate. The enzyme catalyses 4-(phosphooxy)-L-threonine + 2-oxoglutarate = (R)-3-hydroxy-2-oxo-4-phosphooxybutanoate + L-glutamate. Its pathway is amino-acid biosynthesis; L-serine biosynthesis; L-serine from 3-phospho-D-glycerate: step 2/3. It participates in cofactor biosynthesis; pyridoxine 5'-phosphate biosynthesis; pyridoxine 5'-phosphate from D-erythrose 4-phosphate: step 3/5. Functionally, catalyzes the reversible conversion of 3-phosphohydroxypyruvate to phosphoserine and of 3-hydroxy-2-oxo-4-phosphonooxybutanoate to phosphohydroxythreonine. Is involved in both pyridoxine and serine biosynthesis. This Escherichia coli (strain K12) protein is Phosphoserine aminotransferase (serC).